The primary structure comprises 337 residues: Glyceraldehyde-3-phosphate dehydrogenase (337 aa).

Residues 11 to 12, D33, and K78 contribute to the NAD(+) site; that span reads RI. D-glyceraldehyde 3-phosphate is bound by residues 149-151, T180, 209-210, and R232; these read SCT and TG. C150 serves as the catalytic Nucleophile. N314 is an NAD(+) binding site.

This sequence belongs to the glyceraldehyde-3-phosphate dehydrogenase family. In terms of assembly, homotetramer.

The protein resides in the cytoplasm. The catalysed reaction is D-glyceraldehyde 3-phosphate + phosphate + NAD(+) = (2R)-3-phospho-glyceroyl phosphate + NADH + H(+). It participates in carbohydrate degradation; glycolysis; pyruvate from D-glyceraldehyde 3-phosphate: step 1/5. In Lyophyllum shimeji (Hon-shimeji), this protein is Glyceraldehyde-3-phosphate dehydrogenase (GPD).